The following is a 548-amino-acid chain: MRKQVIGINNIFHLARIRSIPVHCHCKGPLYSYPVVSKTLFHTKNVEVSKYSHVELRSLNEQIHSQLTSLTDLNKRQLLLVETLSRNNNLEKLLDYYEIDEGSVEDAIQLLQDSNVSIQEFSSMIQPVLNRTNLVGKYHMGYLSKLMQIYISLTRTHNGGSVDALNKDDMNKFIKRFIEGSQLKRAQTALQFLLDGYKERGEDLLGPYGDKQTIAHFLMLRSGALQDLWKIDVSNGNNKKQAFYKINGSHRNVKSTYNVLDSVKLFEIVRYILRYNDKDNHSQPVYFDEGILKNVILCLGYVGQTTLIEDIINKIWELDSVSVPPKYNITVTSDLLTAIVSAYSKCGKSIQPGLVIADKFFGKIPNIIVKDDFWINLQKWNIILPNKWRSTIDLSKRTWELMKSWRNSTNNGGFITANVEFLNLVYKVLSSDYIKLKDLEWIYDIFQHSLVTLYSKNSLTVDEIKLLKKFQIFTIKKMVYFGHYSKCLQFIKEWSYDAANKQQLTNLFVVLRNRYLQKRGYNQEKEMTKVQKKYDEEEQEDMLLGGLW.

Residues 1–27 (MRKQVIGINNIFHLARIRSIPVHCHCK) constitute a mitochondrion transit peptide.

This sequence belongs to the AEP2 family. Binds to the 5'UTR of the OLI1 mRNA.

The protein resides in the mitochondrion. In terms of biological role, required for translation of the mitochondrial OLI1 transcript coding for the mitochondrial ATP synthase subunit 9. The protein is ATPase expression protein 2, mitochondrial (AEP2) of Candida glabrata (strain ATCC 2001 / BCRC 20586 / JCM 3761 / NBRC 0622 / NRRL Y-65 / CBS 138) (Yeast).